A 609-amino-acid polypeptide reads, in one-letter code: Membrane-bound O-acyltransferase GUP2 (609 aa).

The N-terminal stretch at 1–18 is a signal peptide; the sequence is MSMLRIWSCIVHFFSVQA. Topologically, residues 19–75 are lumenal; it reads LDSRIKPDIEFKRRQRIFINSSKEENGSSSSAVTVTRNPVLSSNSPSPPLWNTWEFR. A helical transmembrane segment spans residues 76-96; it reads LYYLAFTVVVPFMIKAALATS. The Cytoplasmic segment spans residues 97–133; the sequence is SESNPNYYKFSGLLAHGWILGRKVDNSDPQYRFFRSN. A helical membrane pass occupies residues 134 to 154; the sequence is FFLLAILILLQIILKKVFVKF. Topologically, residues 155 to 169 are lumenal; that stretch reads SKIPKTKFDFACGLV. Residues 170–190 traverse the membrane as a helical segment; that stretch reads FVCFMYGINSVKLFTHAFIFF. Residues 191–200 are Cytoplasmic-facing; it reads TLAHSLKRKR. A helical transmembrane segment spans residues 201–221; that stretch reads LIAAFAIWSYGIFTLFINQKM. The Lumenal portion of the chain corresponds to 222 to 324; the sequence is KNLPFNNIAI…VAEHHIQDYN (103 aa). The helical transmembrane segment at 325 to 345 threads the bilayer; sequence FINFIAYITYAPLFLVGPIIT. Residues 346–371 are Cytoplasmic-facing; it reads FNDYLYQSENKLPSLTKKNIGFYALK. A helical transmembrane segment spans residues 372-392; that stretch reads VFSSLLLMEIILHYIYVGAIA. Residues 393–406 lie on the Lumenal side of the membrane; the sequence is RTKAWNNDTPLQQA. The helical transmembrane segment at 407–427 threads the bilayer; sequence MIALFNLNIMYLKLLIPWRLF. The Cytoplasmic segment spans residues 428–474; that stretch reads RLWAMVDGIDAPENMLRCVDNNYSTVGFWRAWHTSFNKWVIRYIYVP. A helical transmembrane segment spans residues 475 to 495; the sequence is FGGSNNKILTSFAVFSFVAIW. H496 is an active-site residue. Residues 496-502 lie on the Lumenal side of the membrane; that stretch reads HDIQLRV. A helical membrane pass occupies residues 503-523; it reads LFWGWLTVLLLLGETYITNCF. Residues 524 to 533 lie on the Cytoplasmic side of the membrane; that stretch reads SRYRFRSWYR. The helical transmembrane segment at 534–554 threads the bilayer; that stretch reads FVCGIGAAINICMMMIINVYG. Residues 555–575 are Lumenal-facing; it reads FCLGAEGTKLLLKGIFNNSHS. A helical transmembrane segment spans residues 576–596; that stretch reads PEFLTAVMVSLFIAVQVMFEI. At 597–609 the chain is on the cytoplasmic side; sequence REEEKRHGINLKC.

Belongs to the membrane-bound acyltransferase family.

It localises to the endoplasmic reticulum membrane. Functionally, probable membrane-bound O-acyltransferase. Together with GUP1, has an influence on the chemical composition of the yeast extracellular matrix (yECM) in yeast multicellular aggregates, such as biofilms and colonies. The chain is Membrane-bound O-acyltransferase GUP2 (GUP2) from Saccharomyces cerevisiae (strain ATCC 204508 / S288c) (Baker's yeast).